The sequence spans 104 residues: Protein MGF 110-2L (104 aa).

Residues 1-19 (MRFFSYLGLLLAGLASLQG) form the signal peptide.

Belongs to the asfivirus MGF 110 family.

Functionally, plays a role in virus cell tropism, and may be required for efficient virus replication in macrophages. The protein is Protein MGF 110-2L of African swine fever virus (isolate Tick/South Africa/Pretoriuskop Pr4/1996) (ASFV).